The chain runs to 237 residues: 2,3-bisphosphoglycerate-dependent phosphoglycerate mutase (237 aa).

Substrate is bound by residues 8-15 (RHGQSAWN), 21-22 (TG), Arg-60, 87-90 (ERHY), Lys-98, 114-115 (RR), and 180-181 (GN). His-9 serves as the catalytic Tele-phosphohistidine intermediate. Glu-87 functions as the Proton donor/acceptor in the catalytic mechanism.

The protein belongs to the phosphoglycerate mutase family. BPG-dependent PGAM subfamily. In terms of assembly, homodimer.

It catalyses the reaction (2R)-2-phosphoglycerate = (2R)-3-phosphoglycerate. Its pathway is carbohydrate degradation; glycolysis; pyruvate from D-glyceraldehyde 3-phosphate: step 3/5. Functionally, catalyzes the interconversion of 2-phosphoglycerate and 3-phosphoglycerate. In Hyphomonas neptunium (strain ATCC 15444), this protein is 2,3-bisphosphoglycerate-dependent phosphoglycerate mutase.